We begin with the raw amino-acid sequence, 173 residues long: Probable lipoprotein EnvE (173 aa).

Positions 1-20 are cleaved as a signal peptide; the sequence is MTLLSGKTTLVLCLSSILCG. Residue Cys-21 is the site of N-palmitoyl cysteine attachment. The S-diacylglycerol cysteine moiety is linked to residue Cys-21.

It localises to the cell membrane. The polypeptide is Probable lipoprotein EnvE (envE) (Salmonella typhimurium (strain LT2 / SGSC1412 / ATCC 700720)).